A 598-amino-acid chain; its full sequence is Insulin-like growth factor 2 mRNA-binding protein 1 (598 aa).

RRM domains lie at 2–75 (NKLY…HSVP) and 81–156 (RKLQ…YIPD). The disordered stretch occupies residues 155–195 (PDENSEVDSQRGPDNGRRPGYGPRGTSRQMSPGSGIPSKHQ). Positions 162-171 (DSQRGPDNGR) are enriched in basic and acidic residues. Ser-185 is modified (phosphoserine). 2 consecutive KH domains span residues 198–263 (DIPL…CRMI) and 279–346 (EVPL…EQEI). At Tyr-399 the chain carries Phosphotyrosine. KH domains are found at residues 407–472 (QETV…QGRI) and 489–555 (KLET…QRKI). A disordered region spans residues 561–598 (QVKQQQKGGGMGTPQGPHPQGMTELGSPQGLAQEPRRK). Phosphothreonine occurs at positions 573 and 583. Positions 574–583 (PQGPHPQGMT) are enriched in low complexity. Ser-587 is modified (phosphoserine).

It belongs to the RRM IMP/VICKZ family. In terms of assembly, component of the CRD-mediated complex.

The protein localises to the nucleus. It localises to the cytoplasm. The protein resides in the perinuclear region. It is found in the P-body. Its subcellular location is the stress granule. The protein localises to the cell projection. It localises to the growth cone. The protein resides in the filopodium. It is found in the lamellipodium. Functionally, RNA-binding factor that recruits target transcripts to cytoplasmic protein-RNA complexes (mRNPs). This transcript 'caging' into mRNPs allows mRNA transport and transient storage. It also modulates the rate and location at which target transcripts encounter the translational apparatus and shields them from endonuclease attacks or microRNA-mediated degradation. Preferentially binds to N6-methyladenosine (m6A)-containing mRNAs and increases their stability. Plays a direct role in the transport and translation of transcripts required for axonal regeneration in adult sensory neurons. Regulates localized beta-actin/ACTB mRNA translation in polarized cells, a crucial process for cell migration and neurite outgrowth. Promotes the directed movement of cells by fine-tuning intracellular signaling networks and enhances the velocity of cell migration. The polypeptide is Insulin-like growth factor 2 mRNA-binding protein 1 (igf2bp1) (Danio rerio (Zebrafish)).